Consider the following 234-residue polypeptide: Phosphoribosylaminoimidazole-succinocarboxamide synthase (234 aa).

This sequence belongs to the SAICAR synthetase family.

The catalysed reaction is 5-amino-1-(5-phospho-D-ribosyl)imidazole-4-carboxylate + L-aspartate + ATP = (2S)-2-[5-amino-1-(5-phospho-beta-D-ribosyl)imidazole-4-carboxamido]succinate + ADP + phosphate + 2 H(+). It functions in the pathway purine metabolism; IMP biosynthesis via de novo pathway; 5-amino-1-(5-phospho-D-ribosyl)imidazole-4-carboxamide from 5-amino-1-(5-phospho-D-ribosyl)imidazole-4-carboxylate: step 1/2. The chain is Phosphoribosylaminoimidazole-succinocarboxamide synthase from Streptococcus agalactiae serotype III (strain NEM316).